A 314-amino-acid polypeptide reads, in one-letter code: Vacuolar membrane protein EC1118_1N9_3125g (314 aa).

The segment at Lys-32–Ala-60 is disordered. Residues Val-93 to Leu-113 traverse the membrane as a helical segment. A phosphoserine mark is found at Ser-148, Ser-254, and Ser-274. A disordered region spans residues Glu-240–Asn-309. The span at Ser-254–His-269 shows a compositional bias: basic and acidic residues.

Belongs to the PRM5 family.

It localises to the vacuole membrane. The chain is Vacuolar membrane protein EC1118_1N9_3125g from Saccharomyces cerevisiae (strain Lalvin EC1118 / Prise de mousse) (Baker's yeast).